Consider the following 273-residue polypeptide: Phosphate import ATP-binding protein PstB (273 aa).

Residues 27 to 268 enclose the ABC transporter domain; that stretch reads VTVRNLNFYY…PSDRRTQDYI (242 aa). 59–66 contacts ATP; that stretch reads GPSGCGKS.

The protein belongs to the ABC transporter superfamily. Phosphate importer (TC 3.A.1.7) family. In terms of assembly, the complex is composed of two ATP-binding proteins (PstB), two transmembrane proteins (PstC and PstA) and a solute-binding protein (PstS).

The protein resides in the cell inner membrane. The enzyme catalyses phosphate(out) + ATP + H2O = ADP + 2 phosphate(in) + H(+). Functionally, part of the ABC transporter complex PstSACB involved in phosphate import. Responsible for energy coupling to the transport system. The polypeptide is Phosphate import ATP-binding protein PstB (Bradyrhizobium diazoefficiens (strain JCM 10833 / BCRC 13528 / IAM 13628 / NBRC 14792 / USDA 110)).